Here is a 590-residue protein sequence, read N- to C-terminus: AT-rich interactive domain-containing protein 5A (590 aa).

Residues 1-52 (MAAPPAKGNTEQSEEGDLPQLPVSPKPDDEQSRSQSPTQLQDSPEAGGEQEE) form a disordered region. Residues 1–294 (MAAPPAKGNT…NKDIQDSPQN (294 aa)) are interaction with SOX9. Ser-24 is subject to Phosphoserine. Residues 33-42 (RSQSPTQLQD) are compositionally biased toward polar residues. Residues 50 to 142 (QEEEQAFLVS…LVLPYVRHLK (93 aa)) enclose the ARID domain. Residues Lys-80 and Lys-89 each participate in a glycyl lysine isopeptide (Lys-Gly) (interchain with G-Cter in ubiquitin) cross-link. Residues 141–229 (LKGEDDKPLP…SGPSPPLTGA (89 aa)) are disordered. Residues 160-186 (MAKELRGDDGTTEKLKKAKDSEERRVE) are compositionally biased toward basic and acidic residues. Polar residues predominate over residues 187 to 210 (QTTPGKTKSDATGQTQLPCQGSSR). 2 positions are modified to phosphoserine: Ser-253 and Ser-283. Disordered regions lie at residues 275-323 (EGCR…RMEA), 367-402 (GPPG…TRKR), and 419-443 (VPTE…RGLE). Basic and acidic residues predominate over residues 367-381 (GPPGKEEGPTTKESH). A phosphoserine mark is found at Ser-433 and Ser-458.

As to quaternary structure, interacts with SOX9. Interacts with ESR1. Interacts with RORC. Post-translationally, phosphorylated by MAPK14 on serine residues involving a TLR4 signaling pathway upon lipopolysaccharide (LPS) stimulation leading to its ubiquitination and proteasomal degradation. Ubiquitinated leading to proteasomal degradation; involving WWP1 linked to MAPK14-mediated phosphorylation upon LPS stimulation. Expressed in T cells (at protein level). Expressed at high levels in cartilage, heart, testis and bone.

Its subcellular location is the nucleus. In terms of biological role, DNA-binding protein that may regulate transcription and act as a repressor by binding to AT-rich stretches in the promoter region of target genes. May positively regulate chondrocyte-specific transcription such as of COL2A1 in collaboration with SOX9 and positively regulate histone H3 acetylation at chondrocyte-specific genes. May stimulate early-stage chondrocyte differentiation and inhibit later stage differention. Can repress ESR1-mediated transcriptional activation; proposed to act as corepressor for selective nuclear hormone receptors. As an RNA-binding protein, involved in the regulation of inflammatory response by stabilizing selective inflammation-related mRNAs, such as STAT3 and TBX21. Also stabilizes IL6 mRNA. Binds to stem loop structures located in the 3'UTRs of IL6, STAT3 and TBX21 mRNAs; at least for STAT3 prevents binding of ZC3H12A to the mRNA stem loop structure thus inhibiting its degradation activity. Contributes to elevated IL6 levels possibly implicated in autoimmunity processes. IL6-dependent stabilization of STAT3 mRNA may promote differentiation of naive CD4+ T-cells into T-helper Th17 cells. In CD4+ T-cells may also inhibit RORC-induced Th17 cell differentiation independently of IL6 signaling. Stabilization of TBX21 mRNA contributes to elevated interferon-gamma secretion in Th1 cells possibly implicated in the establishment of septic shock. Stabilizes TNFRSF4/OX40 mRNA by binding to the conserved stem loop structure in its 3'UTR; thereby competing with the mRNA-destabilizing functions of RC3H1 and endoribonuclease ZC3H12A. This chain is AT-rich interactive domain-containing protein 5A (Arid5a), found in Mus musculus (Mouse).